The chain runs to 340 residues: Meiotic recombination protein DMC1/LIM15 homolog (340 aa).

ATP is bound at residue 126-133 (GEFRTGKT). Residue Arg-230 coordinates dsDNA. Residues Arg-230, Phe-233, Arg-236, Arg-242, and Arg-311 each coordinate ssDNA. DsDNA-binding residues include Arg-236 and Arg-242.

Belongs to the RecA family. DMC1 subfamily. As to quaternary structure, double stacked ring-shaped homooctamer. Interacts with BRCA2. Interacts with the MND1-PSMC3IP heterodimer. Interacts with RAD51AP1; the interaction is direct and stimulates DMC1-mediated homologous recombination. As to expression, testis.

The protein resides in the nucleus. Its subcellular location is the chromosome. Its function is as follows. Participates in meiotic recombination, specifically in homologous strand assimilation, which is required for the resolution of meiotic double-strand breaks. The chain is Meiotic recombination protein DMC1/LIM15 homolog from Mus musculus (Mouse).